A 300-amino-acid chain; its full sequence is Epimerase family protein SAR0825 (300 aa).

Belongs to the NAD(P)-dependent epimerase/dehydratase family. SDR39U1 subfamily.

This chain is Epimerase family protein SAR0825, found in Staphylococcus aureus (strain MRSA252).